The following is a 131-amino-acid chain: SPbeta prophage-derived uncharacterized protein YosD (131 aa).

Residues 102–131 are disordered; sequence EHNNKKAKNNDTQNQRQIKTSWWQRLTKKD. The segment covering 111 to 125 has biased composition (polar residues); that stretch reads NDTQNQRQIKTSWWQ.

The polypeptide is SPbeta prophage-derived uncharacterized protein YosD (yosD) (Bacillus subtilis (strain 168)).